Consider the following 317-residue polypeptide: MIEVKHLKTLQALRNCGSLAAAAATLHQTQSALSHQFSDLEQRLGFRLFVRKSQPLRFTPQGEILLQLANQVLPQISQALQACNEPQQTRLRIAIECHSCIQWLTPALENFHKNWPQVEMDFKSGVTFDPQPALQQGELDLVMTSDILPRSGLHYSPMFDYEVRLVLAPDHPLAAKTRITPEDLASETLLIYPVQRSRLDVWRHFLQPAGVSPSLKSVDNTLLLIQMVAARMGIAALPHWVVESFERQGLVVTKTLGEGLWSRLYAAVRDGEQRQPVTEAFIRSARNHACDHLPFVKSAERPTYDAPTVRPGSPARL.

The HTH lysR-type domain maps to 1–59; that stretch reads MIEVKHLKTLQALRNCGSLAAAAATLHQTQSALSHQFSDLEQRLGFRLFVRKSQPLRFT. The H-T-H motif DNA-binding region spans 19 to 38; it reads LAAAAATLHQTQSALSHQFS.

Belongs to the LysR transcriptional regulatory family.

Its subcellular location is the cytoplasm. Its function is as follows. Control of the last step in methionine biosynthesis; MetR is a positive activator of the metA, metE and metH genes. It is also a negative regulator of its own expression. In Escherichia coli O157:H7, this protein is HTH-type transcriptional regulator MetR (metR).